We begin with the raw amino-acid sequence, 50 residues long: Insulin (50 aa).

3 cysteine pairs are disulfide-bonded: cysteine 7–cysteine 36, cysteine 19–cysteine 49, and cysteine 35–cysteine 40.

It belongs to the insulin family. Heterodimer of a B chain and an A chain linked by two disulfide bonds.

It localises to the secreted. Its function is as follows. Insulin decreases blood glucose concentration. It increases cell permeability to monosaccharides, amino acids and fatty acids. It accelerates glycolysis, the pentose phosphate cycle, and glycogen synthesis in liver. This chain is Insulin (ins), found in Katsuwonus pelamis (Skipjack tuna).